Consider the following 222-residue polypeptide: N-(5'-phosphoribosyl)anthranilate isomerase (222 aa).

This sequence belongs to the TrpF family.

It carries out the reaction N-(5-phospho-beta-D-ribosyl)anthranilate = 1-(2-carboxyphenylamino)-1-deoxy-D-ribulose 5-phosphate. Its pathway is amino-acid biosynthesis; L-tryptophan biosynthesis; L-tryptophan from chorismate: step 3/5. The chain is N-(5'-phosphoribosyl)anthranilate isomerase from Brucella abortus (strain S19).